We begin with the raw amino-acid sequence, 274 residues long: Dermonecrotic toxin SdSicTox-betaIIB1aii (274 aa).

H5 is a catalytic residue. Residues E25 and D27 each coordinate Mg(2+). H41 acts as the Nucleophile in catalysis. Intrachain disulfides connect C45–C51 and C47–C190. D85 provides a ligand contact to Mg(2+).

The protein belongs to the arthropod phospholipase D family. Class II subfamily. It depends on Mg(2+) as a cofactor. In terms of tissue distribution, expressed by the venom gland.

The protein localises to the secreted. The enzyme catalyses an N-(acyl)-sphingosylphosphocholine = an N-(acyl)-sphingosyl-1,3-cyclic phosphate + choline. It carries out the reaction an N-(acyl)-sphingosylphosphoethanolamine = an N-(acyl)-sphingosyl-1,3-cyclic phosphate + ethanolamine. The catalysed reaction is a 1-acyl-sn-glycero-3-phosphocholine = a 1-acyl-sn-glycero-2,3-cyclic phosphate + choline. It catalyses the reaction a 1-acyl-sn-glycero-3-phosphoethanolamine = a 1-acyl-sn-glycero-2,3-cyclic phosphate + ethanolamine. Its function is as follows. Dermonecrotic toxins cleave the phosphodiester linkage between the phosphate and headgroup of certain phospholipids (sphingolipid and lysolipid substrates), forming an alcohol (often choline) and a cyclic phosphate. This toxin acts on sphingomyelin (SM). It may also act on ceramide phosphoethanolamine (CPE), lysophosphatidylcholine (LPC) and lysophosphatidylethanolamine (LPE), but not on lysophosphatidylserine (LPS), and lysophosphatidylglycerol (LPG). It acts by transphosphatidylation, releasing exclusively cyclic phosphate products as second products. Induces dermonecrosis, hemolysis, increased vascular permeability, edema, inflammatory response, and platelet aggregation. The protein is Dermonecrotic toxin SdSicTox-betaIIB1aii of Sicarius cf. damarensis (strain GJB-2008) (Six-eyed sand spider).